Reading from the N-terminus, the 472-residue chain is MSSVFPGPRFLSLLQQNSKTLIQAKQIHAQLVINGCHDNSLFGKLIGHYCSKPSTESSSKLAHLLVFPRFGHPDKFLFNTLLKCSKPEDSIRIFANYASKSSLLYLNERTFVFVLGACARSASSSALRVGRIVHGMVKKLGFLYESELIGTTLLHFYAKNGDLRYARKVFDEMPERTSVTWNAMIGGYCSHKDKGNHNARKAMVLFRRFSCCGSGVRPTDTTMVCVLSAISQTGLLEIGSLVHGYIEKLGFTPEVDVFIGTALVDMYSKCGCLNNAFSVFELMKVKNVFTWTSMATGLALNGRGNETPNLLNRMAESGIKPNEITFTSLLSAYRHIGLVEEGIELFKSMKTRFGVTPVIEHYGCIVDLLGKAGRIQEAYQFILAMPIKPDAILLRSLCNACSIYGETVMGEEIGKALLEIEREDEKLSGSECEDYVALSNVLAHKGKWVEVEKLRKEMKERRIKTRPGYSFV.

PPR repeat units follow at residues 107 to 139 (NERT…MVKK), 146 to 180 (SELI…TSVT), 181 to 216 (WNAM…GSGV), 219 to 253 (TDTT…GFTP), 256 to 286 (DVFI…MKVK), 287 to 321 (NVFT…GIKP), 322 to 352 (NEIT…MKTR), and 358 to 388 (VIEH…MPIK). A type E motif; degenerate region spans residues 393 to 472 (LLRSLCNACS…IKTRPGYSFV (80 aa)).

It belongs to the PPR family. PCMP-E subfamily.

This chain is Pentatricopeptide repeat-containing protein At3g18970 (PCMP-E93), found in Arabidopsis thaliana (Mouse-ear cress).